A 464-amino-acid polypeptide reads, in one-letter code: Protein VAPYRIN-LIKE (464 aa).

The 122-residue stretch at 3 to 124 folds into the MSP domain; the sequence is RLVKTEFNEV…RDAVITVILV (122 aa). ANK repeat units follow at residues 153–182, 186–215, 217–246, 252–281, 285–314, 318–347, 349–368, 372–401, and 405–435; these read NLTN…DVNF, NGKS…RIND, VDFV…ELDV, EMMT…NANA, RRWT…VKYA, NGKT…LLQA, RVDD…EVNR, NGWT…EVDS, and AGYT…QTNL.

In terms of tissue distribution, expressed in roots.

Its subcellular location is the cytoplasm. The protein localises to the nucleus. It is found in the cell membrane. In terms of biological role, may be involved in arbuscular mycorrhizal (AM) symbiosis with AM fungi and in nitrogen-fixing rhizobial bacteria symbiosis leading to the formation of root nodules. In Medicago truncatula (Barrel medic), this protein is Protein VAPYRIN-LIKE.